The sequence spans 469 residues: Diaminobutyrate--2-oxoglutarate transaminase (469 aa).

Lysine 290 bears the N6-(pyridoxal phosphate)lysine mark.

It belongs to the class-III pyridoxal-phosphate-dependent aminotransferase family. The cofactor is pyridoxal 5'-phosphate.

The protein localises to the cytoplasm. It carries out the reaction L-2,4-diaminobutanoate + 2-oxoglutarate = L-aspartate 4-semialdehyde + L-glutamate. Functionally, involved in the degradation of ectoine, which allows H.elongata to utilize ectoine as both a carbon and a nitrogen source for growth. Probably catalyzes the conversion of L-2,4-diaminobutyrate (DABA) to L-aspartate beta-semialdehyde (ASA) by transamination with 2-oxoglutarate. This Halomonas elongata (strain ATCC 33173 / DSM 2581 / NBRC 15536 / NCIMB 2198 / 1H9) protein is Diaminobutyrate--2-oxoglutarate transaminase.